The sequence spans 484 residues: tRNA sulfurtransferase (484 aa).

The THUMP domain maps to arginine 63–glutamine 167. ATP contacts are provided by residues leucine 185 to methionine 186, lysine 267, glycine 289, and glutamine 298. Residues cysteine 346 and cysteine 457 are joined by a disulfide bond. Positions alanine 405–proline 483 constitute a Rhodanese domain. The active-site Cysteine persulfide intermediate is the cysteine 457.

The protein belongs to the ThiI family.

It localises to the cytoplasm. It catalyses the reaction [ThiI sulfur-carrier protein]-S-sulfanyl-L-cysteine + a uridine in tRNA + 2 reduced [2Fe-2S]-[ferredoxin] + ATP + H(+) = [ThiI sulfur-carrier protein]-L-cysteine + a 4-thiouridine in tRNA + 2 oxidized [2Fe-2S]-[ferredoxin] + AMP + diphosphate. The catalysed reaction is [ThiS sulfur-carrier protein]-C-terminal Gly-Gly-AMP + S-sulfanyl-L-cysteinyl-[cysteine desulfurase] + AH2 = [ThiS sulfur-carrier protein]-C-terminal-Gly-aminoethanethioate + L-cysteinyl-[cysteine desulfurase] + A + AMP + 2 H(+). The protein operates within cofactor biosynthesis; thiamine diphosphate biosynthesis. Catalyzes the ATP-dependent transfer of a sulfur to tRNA to produce 4-thiouridine in position 8 of tRNAs, which functions as a near-UV photosensor. Also catalyzes the transfer of sulfur to the sulfur carrier protein ThiS, forming ThiS-thiocarboxylate. This is a step in the synthesis of thiazole, in the thiamine biosynthesis pathway. The sulfur is donated as persulfide by IscS. The protein is tRNA sulfurtransferase of Pseudomonas putida (strain ATCC 47054 / DSM 6125 / CFBP 8728 / NCIMB 11950 / KT2440).